The chain runs to 153 residues: Endoribonuclease YbeY (153 aa).

Residues H114, H118, and H124 each contribute to the Zn(2+) site.

This sequence belongs to the endoribonuclease YbeY family. Zn(2+) is required as a cofactor.

The protein resides in the cytoplasm. Its function is as follows. Single strand-specific metallo-endoribonuclease involved in late-stage 70S ribosome quality control and in maturation of the 3' terminus of the 16S rRNA. This chain is Endoribonuclease YbeY, found in Shewanella baltica (strain OS195).